We begin with the raw amino-acid sequence, 178 residues long: UPF0228 protein MM_0401 (178 aa).

This sequence belongs to the UPF0228 family.

The protein is UPF0228 protein MM_0401 of Methanosarcina mazei (strain ATCC BAA-159 / DSM 3647 / Goe1 / Go1 / JCM 11833 / OCM 88) (Methanosarcina frisia).